A 445-amino-acid chain; its full sequence is GTPase Der (445 aa).

EngA-type G domains follow at residues P3–D167 and I180–N353. GTP contacts are provided by residues G9 to S16, D56 to F60, N119 to E122, G186 to S193, D233 to L237, and N298 to D301. Residues R354–V438 enclose the KH-like domain.

This sequence belongs to the TRAFAC class TrmE-Era-EngA-EngB-Septin-like GTPase superfamily. EngA (Der) GTPase family. As to quaternary structure, associates with the 50S ribosomal subunit.

GTPase that plays an essential role in the late steps of ribosome biogenesis. The protein is GTPase Der of Polaromonas naphthalenivorans (strain CJ2).